The chain runs to 69 residues: Large ribosomal subunit protein bL31 (69 aa).

Zn(2+)-binding residues include C16, C18, C37, and C40.

This sequence belongs to the bacterial ribosomal protein bL31 family. Type A subfamily. As to quaternary structure, part of the 50S ribosomal subunit. Zn(2+) is required as a cofactor.

Binds the 23S rRNA. The sequence is that of Large ribosomal subunit protein bL31 from Buchnera aphidicola subsp. Baizongia pistaciae (strain Bp).